The sequence spans 936 residues: Protocadherin alpha-5 (936 aa).

A signal peptide spans 1–28 (MVYSRRGSLGSRLLLLWLLLAYWKAGSG). Residues 29–696 (QLHYSIPEEA…GPEAALVDVN (668 aa)) lie on the Extracellular side of the membrane. Cadherin domains follow at residues 33-132 (SIPE…PPRF), 156-241 (ASDL…APEF), 242-349 (DKSI…TPEM), 350-454 (AITT…APAF), 455-564 (AQPQ…APAL), and 580-677 (VPRS…APKA). N-linked (GlcNAc...) asparagine glycosylation is present at Asn264. Asn547 is a glycosylation site (N-linked (GlcNAc...) asparagine). Residues 697–717 (VYLIIAICAVSSLLVLTLLLY) traverse the membrane as a helical segment. Residues 718 to 936 (TALRCSAQPT…GNSTTDNSDQ (219 aa)) lie on the Cytoplasmic side of the membrane. 2 disordered regions span residues 759 to 793 (SGEA…PDWR) and 816 to 936 (AGPG…NSDQ). PXXP repeat units follow at residues 773-776 (PSLP), 785-788 (PRQP), 818-821 (PGGP), 873-876 (KFII), and 877-890 (PGSP…QEPT). Residues 773–890 (PSLPQGPTST…AIISIRQEPT (118 aa)) form a 5 X 4 AA repeats of P-X-X-P region. The segment covering 774-786 (SLPQGPTSTDNPR) has biased composition (polar residues). Residues 895–909 (DKSDFITFGKKEETK) show a composition bias toward basic and acidic residues.

The protein resides in the cell membrane. Potential calcium-dependent cell-adhesion protein. May be involved in the establishment and maintenance of specific neuronal connections in the brain. The chain is Protocadherin alpha-5 (PCDHA5) from Homo sapiens (Human).